Reading from the N-terminus, the 222-residue chain is Uridine diphosphate glucose pyrophosphatase NUDT14 (222 aa).

The Nudix hydrolase domain maps to 38–206 (KTHDSVTILM…DVPKTLGVIF (169 aa)). The Nudix box signature appears at 111-129 (PGLSLEEVACKEAWEECGY).

Belongs to the Nudix hydrolase family. In terms of assembly, homodimer. Requires Mg(2+) as cofactor.

The protein localises to the cytoplasm. The catalysed reaction is UDP-sugar + H2O = UMP + alpha-D-aldose 1-phosphate.. Its function is as follows. Hydrolyzes UDP-glucose to glucose 1-phosphate and UMP and ADP-ribose to ribose 5-phosphate and AMP. The physiological substrate is probably UDP-glucose. Poor activity on other substrates such as ADP-glucose, CDP-glucose, GDP-glucose and GDP-mannose. This chain is Uridine diphosphate glucose pyrophosphatase NUDT14 (NUDT14), found in Bos taurus (Bovine).